Here is a 174-residue protein sequence, read N- to C-terminus: MSRAAGHRPGLSAGQLAAATASPLLSLLLLLACCADACKGVPISPQRLQPEQELQLWNEIHEACASFLSIDSRPQASVALRELCRIVMEISQKPQEQSEKDNTKRFLFHYSKTQKLGNSNVVSSVVHPLLQLVPQLHERRMKRFKAEYQSPSVGQSKGYFLFRPRNGKRSTSFI.

A signal peptide spans 1-37 (MSRAAGHRPGLSAGQLAAATASPLLSLLLLLACCADA). Residues 38-105 (CKGVPISPQR…EQSEKDNTKR (68 aa)) constitute a propeptide that is removed on maturation. Residue Met-141 is modified to Methionine sulfoxide; partial. Asparagine amide is present on Asn-166. A propeptide spanning residues 170 to 174 (STSFI) is cleaved from the precursor.

The protein belongs to the NmU family.

It localises to the secreted. Its function is as follows. Ligand for receptors NMUR1 and NMUR2. Stimulates muscle contractions of specific regions of the gastrointestinal tract. Functionally, does not function as a ligand for either NMUR1 or NMUR2. Indirectly induces prolactin release although its potency is much lower than that of neuromedin precursor-related peptide 36. Does not function as a ligand for either NMUR1 or NMUR2. Indirectly induces prolactin release from lactotroph cells in the pituitary gland, probably via the hypothalamic dopaminergic system. In terms of biological role, stimulates muscle contractions of specific regions of the gastrointestinal tract. The polypeptide is Neuromedin-U (Nmu) (Mus musculus (Mouse)).